Consider the following 507-residue polypeptide: NADH-quinone oxidoreductase subunit N (507 aa).

15 helical membrane passes run 17–37, 46–66, 81–101, 113–133, 134–154, 168–188, 190–210, 211–231, 245–265, 279–299, 307–327, 334–354, 392–412, 425–445, and 478–498; these read LVTLSPLILLAAAAVVVMLTA, VMILTLAGLVLSFMALFLSQG, YALFFIGLIVVATFVVAILCY, ALYILLLLAALGGGVLVASSH, FASFLLGLELLSISLFALIAY, YLILAGFSSGLLLFGMALVYA, LGTMQFVKIGTMLAAPGAALE, LYGLAGLALIVTGVGFKLALV, PVPITAFIATASKGAMLVLLL, ITFALSLIAVATILVGNLLAL, ILAYSSIAQLGYLLVGFLAFD, VAYFLTAYFVTMLGAFGVVTV, AGVFTAMLLSLAGIPLTMGFI, SLWMPVITLVIGSIIGLFYYM, and LAALALLLIWLGIFPAQLIGV.

Belongs to the complex I subunit 2 family. In terms of assembly, NDH-1 is composed of 14 different subunits. Subunits NuoA, H, J, K, L, M, N constitute the membrane sector of the complex.

The protein resides in the cell inner membrane. The catalysed reaction is a quinone + NADH + 5 H(+)(in) = a quinol + NAD(+) + 4 H(+)(out). In terms of biological role, NDH-1 shuttles electrons from NADH, via FMN and iron-sulfur (Fe-S) centers, to quinones in the respiratory chain. The immediate electron acceptor for the enzyme in this species is believed to be ubiquinone. Couples the redox reaction to proton translocation (for every two electrons transferred, four hydrogen ions are translocated across the cytoplasmic membrane), and thus conserves the redox energy in a proton gradient. The polypeptide is NADH-quinone oxidoreductase subunit N (Nitrosospira multiformis (strain ATCC 25196 / NCIMB 11849 / C 71)).